Reading from the N-terminus, the 519-residue chain is bZIP transcription factor 30 (519 aa).

Disordered regions lie at residues 1–30 (MGGG…IPKH), 45–83 (FRHP…QPSS), 108–202 (TGAG…RKPE), 222–295 (VLNS…TGRH), and 315–339 (SSLK…NSSA). Residues 51-61 (GAPPPPIPPIS) are compositionally biased toward pro residues. Residues 149–173 (SDVTFGFSSMMSQNQKSPPLSSLER) show a composition bias toward polar residues. Residues 187–202 (VKKEPREGFYKGRKPE) are compositionally biased toward basic and acidic residues. Low complexity-rich tracts occupy residues 244–268 (SRGS…SASG) and 317–329 (LKLP…KVSP). The span at 330–339 (TNSGEGNSSA) shows a compositional bias: polar residues. The segment at 372 to 393 (KRVKRILANRVSAARSKERKTR) is basic motif. Positions 386–460 (RSKERKTRYM…SEKLNEEVQR (75 aa)) form a coiled coil. Positions 398 to 433 (LEHKVQTLQTEATTLSAQLTHLQRDSMGLTNQNSEL) are leucine-zipper. A disordered region spans residues 465–519 (IGEPNRRQSGSSSSESKMSLNPEMFQQLSISQLQHQQMQHSNQCSTMKAKHTSND). Low complexity-rich tracts occupy residues 473 to 483 (SGSSSSESKMS) and 490 to 509 (QQLS…NQCS).

As to quaternary structure, interacts with WUS, HEC1, KNAT1, KNAT2, HAT1, BEL1, and NGA1. Expressed in inflorescence meristem, floral organ primordia, gynoecia, ovules and carpel margin meristem.

It localises to the nucleus. In terms of biological role, transcription factor that acts as a repressor of reproductive development, meristem size and plant growth. Acts as a transcriptional repressor in inflorescence tissues. Interacts with well known regulators of meristem and gynoecium development such as WUS, HEC1, KNAT1, KNAT2, HAT1, BEL1 and NGA1. Acts as a positive regulator of JAG and OFP1 expression in developing gynoecia. The polypeptide is bZIP transcription factor 30 (Arabidopsis thaliana (Mouse-ear cress)).